We begin with the raw amino-acid sequence, 254 residues long: Metallo-beta-lactamase type 2 (254 aa).

The first 27 residues, 1–27, serve as a signal peptide directing secretion; the sequence is MMKGWMKCGLAGAVVLMASFWGGSVRA. D99 contacts Zn(2+). Positions 135 and 174 each coordinate substrate. Residue C193 participates in Zn(2+) binding. K196 and N201 together coordinate substrate. H231 serves as a coordination point for Zn(2+).

Belongs to the metallo-beta-lactamase superfamily. Class-B beta-lactamase family. In terms of assembly, monomer. It depends on Zn(2+) as a cofactor.

It is found in the periplasm. It catalyses the reaction a beta-lactam + H2O = a substituted beta-amino acid. Its activity is regulated as follows. Competitively inhibited by mercaptophosphonate and pyridine carboxylate derivatives. Also inhibited by the binding of a second zinc ion and by chelating agents such as EDTA. Functionally, confers resistance to the different beta-lactams antibiotics (penicillin, cephalosporin and carbapenem) via the hydrolysis of the beta-lactam ring. It is able to hydrolyze penicillin and imipenem, but is much less active against cephalothin, cefotaxime, meropenem and ceftazidime. The sequence is that of Metallo-beta-lactamase type 2 from Aeromonas hydrophila.